Here is a 503-residue protein sequence, read N- to C-terminus: AMP phosphorylase (503 aa).

Residues Gly-168, 194–199 (SRAITS), and Thr-203 each bind AMP. Asp-256 acts as the Proton donor in catalysis. 2 residues coordinate AMP: Ser-264 and Lys-288.

This sequence belongs to the thymidine/pyrimidine-nucleoside phosphorylase family. Type 2 subfamily. In terms of assembly, forms an exceptionally large macromolecular structure (&gt;40-mers) in solution.

It carries out the reaction AMP + phosphate = alpha-D-ribose 1,5-bisphosphate + adenine. It catalyses the reaction CMP + phosphate = cytosine + alpha-D-ribose 1,5-bisphosphate. The enzyme catalyses UMP + phosphate = alpha-D-ribose 1,5-bisphosphate + uracil. Its activity is regulated as follows. AMP phosphorolysis is allosterically regulated by the substrate AMP. Its function is as follows. Catalyzes the conversion of AMP and phosphate to adenine and ribose 1,5-bisphosphate (R15P). Exhibits phosphorylase activity toward CMP, dCMP and UMP in addition to AMP. Functions in an archaeal AMP degradation pathway, together with R15P isomerase and RubisCO. This Thermococcus kodakarensis (strain ATCC BAA-918 / JCM 12380 / KOD1) (Pyrococcus kodakaraensis (strain KOD1)) protein is AMP phosphorylase.